The primary structure comprises 116 residues: Putative iron-sulfur cluster insertion protein ErpA (116 aa).

The iron-sulfur cluster site is built by C44, C108, and C110.

The protein belongs to the HesB/IscA family. As to quaternary structure, homodimer. It depends on iron-sulfur cluster as a cofactor.

Its function is as follows. Required for insertion of 4Fe-4S clusters. The chain is Putative iron-sulfur cluster insertion protein ErpA from Dechloromonas aromatica (strain RCB).